The chain runs to 395 residues: Probable isocitrate dehydrogenase [NAD] gamma 2, mitochondrial (395 aa).

The N-terminal 25 residues, 1–25 (MLAAGSCSVRTILQPALLLGHSREV), are a transit peptide targeting the mitochondrion. T117 is a citrate binding site. Positions 133, 164, and 251 each coordinate substrate. D251 is a binding site for Mn(2+). ADP is bound at residue N321.

It belongs to the isocitrate and isopropylmalate dehydrogenases family. Heterooligomer of subunits alpha (IDH3A), beta (IDH3B), and gamma (IDH3G) in the apparent ratio of 2:1:1. The heterodimer containing one IDH3A and one IDH3B subunit and the heterodimer containing one IDH3A and one IDH3G subunit assemble into a heterotetramer (which contains two subunits of IDH3A, one of IDH3B and one of IDH3G) and further into the heterooctamer. Mg(2+) is required as a cofactor. The cofactor is Mn(2+).

It localises to the mitochondrion. Its activity is regulated as follows. The heterotetramer and the heterodimer composed of IDH3A and IDH3G subunits can be allosterically activated by citrate (CIT) or/and ADP, and the two activators can act independently or synergistically. The heterodimer composed of IDH3A and IDH3B subunits cannot be allosterically regulated and the allosteric regulation of the heterotetramer is through the IDH3G subunit and not the IDH3B subunit. The IDH3G subunit contains the allosteric site which consists of a CIT-binding site and an ADP-binding site, and the binding of CIT and ADP causes conformational changes at the allosteric site which are transmitted to the active site in the catalytic subunit (IDH3A) through a cascade of conformational changes at the heterodimer interface, leading to stabilization of the isocitrate-binding at the active site and thus activation of the enzyme. ATP can activate the heterotetramer and the heterodimer composed of IDH3A and IDH3G subunits at low concentrations but inhibits their activities at high concentrations, whereas ATP exhibits only inhibitory effect on the heterodimer composed of IDH3A and IDH3B subunits. In terms of biological role, regulatory subunit which plays a role in the allosteric regulation of the enzyme catalyzing the decarboxylation of isocitrate (ICT) into alpha-ketoglutarate. The heterodimer composed of the alpha (IDH3A) and beta (IDH3B) subunits and the heterodimer composed of the alpha (IDH3A) and gamma (IDH3G) subunits, have considerable basal activity but the full activity of the heterotetramer (containing two subunits of IDH3A, one of IDH3B and one of IDH3G) requires the assembly and cooperative function of both heterodimers. The polypeptide is Probable isocitrate dehydrogenase [NAD] gamma 2, mitochondrial (Rattus norvegicus (Rat)).